The following is a 189-amino-acid chain: Movement protein (189 aa).

This sequence belongs to the tombusvirus/aureusvirus movement protein p22 family. In terms of assembly, interacts with host protein HFI22. Post-translationally, phosphorylated.

The protein localises to the host membrane. Functionally, transports viral genome to neighboring plant cells directly through plasmosdesmata, without any budding. The movement protein allows efficient cell to cell propagation, by bypassing the host cell wall barrier. Displays RNA-binding activity. This is Movement protein from Capsicum annuum (Capsicum pepper).